A 946-amino-acid polypeptide reads, in one-letter code: Protein translocase subunit SecA (946 aa).

ATP-binding positions include glutamine 89, 107–111 (GEGKT), and aspartate 508. Residues 534–569 (PEDSHKPPVPLQRRKDSSVGFGKEENNSKDKKVNHS) are disordered. Positions 546–569 (RRKDSSVGFGKEENNSKDKKVNHS) are enriched in basic and acidic residues.

Belongs to the SecA family. In terms of assembly, monomer and homodimer. Part of the essential Sec protein translocation apparatus which comprises SecA, SecYEG and auxiliary proteins SecDF. Other proteins may also be involved.

The protein localises to the cell inner membrane. Its subcellular location is the cellular thylakoid membrane. The protein resides in the cytoplasm. The enzyme catalyses ATP + H2O + cellular proteinSide 1 = ADP + phosphate + cellular proteinSide 2.. In terms of biological role, part of the Sec protein translocase complex. Interacts with the SecYEG preprotein conducting channel. Has a central role in coupling the hydrolysis of ATP to the transfer of proteins into and across the cell membrane, serving as an ATP-driven molecular motor driving the stepwise translocation of polypeptide chains across the membrane. Functionally, probably participates in protein translocation into and across both the cytoplasmic and thylakoid membranes in cyanobacterial cells. The protein is Protein translocase subunit SecA of Prochlorococcus marinus (strain SARG / CCMP1375 / SS120).